A 428-amino-acid polypeptide reads, in one-letter code: NADH-ubiquinone oxidoreductase chain 2 (428 aa).

The next 14 membrane-spanning stretches (helical) occupy residues Ile-22–Gly-42, Leu-59–Asn-79, Leu-84–Thr-104, Leu-108–Leu-128, Leu-140–Leu-160, Ile-185–Pro-205, Trp-218–Leu-238, Leu-241–Ala-261, Phe-269–Asp-289, Ala-292–Ser-312, Leu-332–Phe-352, Leu-356–Leu-376, Tyr-384–Ile-404, and Tyr-408–Leu-428.

This sequence belongs to the complex I subunit 2 family.

Its subcellular location is the mitochondrion inner membrane. The catalysed reaction is a ubiquinone + NADH + 5 H(+)(in) = a ubiquinol + NAD(+) + 4 H(+)(out). Core subunit of the mitochondrial membrane respiratory chain NADH dehydrogenase (Complex I) that is believed to belong to the minimal assembly required for catalysis. Complex I functions in the transfer of electrons from NADH to the respiratory chain. The immediate electron acceptor for the enzyme is believed to be ubiquinone. The polypeptide is NADH-ubiquinone oxidoreductase chain 2 (Hyaloraphidium curvatum (Lower fungus)).